Consider the following 442-residue polypeptide: Serine--tRNA ligase (442 aa).

An L-serine-binding site is contributed by 244–246; that stretch reads TAE. Residue 275–277 participates in ATP binding; the sequence is RAE. Glu298 is an L-serine binding site. Residue 365-368 coordinates ATP; that stretch reads EISS. Ser400 is a binding site for L-serine.

Belongs to the class-II aminoacyl-tRNA synthetase family. Type-1 seryl-tRNA synthetase subfamily. In terms of assembly, homodimer. The tRNA molecule binds across the dimer.

The protein localises to the cytoplasm. The enzyme catalyses tRNA(Ser) + L-serine + ATP = L-seryl-tRNA(Ser) + AMP + diphosphate + H(+). It catalyses the reaction tRNA(Sec) + L-serine + ATP = L-seryl-tRNA(Sec) + AMP + diphosphate + H(+). It functions in the pathway aminoacyl-tRNA biosynthesis; selenocysteinyl-tRNA(Sec) biosynthesis; L-seryl-tRNA(Sec) from L-serine and tRNA(Sec): step 1/1. Catalyzes the attachment of serine to tRNA(Ser). Is also able to aminoacylate tRNA(Sec) with serine, to form the misacylated tRNA L-seryl-tRNA(Sec), which will be further converted into selenocysteinyl-tRNA(Sec). This Bradyrhizobium sp. (strain BTAi1 / ATCC BAA-1182) protein is Serine--tRNA ligase.